The primary structure comprises 227 residues: Cytochrome c oxidase subunit 2 (227 aa).

At 1–14 the chain is on the mitochondrial intermembrane side; the sequence is MAYPFQLGLQDATS. The chain crosses the membrane as a helical span at residues 15-45; it reads PIMEELLHFHDHTLMIVFLISSLVLYIISLM. Residues 46 to 59 are Mitochondrial matrix-facing; that stretch reads LTTKLTHTSTMDAQ. A helical membrane pass occupies residues 60-87; sequence EVETVWTILPAIILILIALPSLRILYMM. At 88–227 the chain is on the mitochondrial intermembrane side; that stretch reads DEINNPSLTV…YFETWSAVMV (140 aa). Cu cation-binding residues include H161, C196, E198, C200, H204, and M207. Mg(2+) is bound at residue E198. A Phosphotyrosine modification is found at Y218.

This sequence belongs to the cytochrome c oxidase subunit 2 family. As to quaternary structure, component of the cytochrome c oxidase (complex IV, CIV), a multisubunit enzyme composed of 14 subunits. The complex is composed of a catalytic core of 3 subunits MT-CO1, MT-CO2 and MT-CO3, encoded in the mitochondrial DNA, and 11 supernumerary subunits COX4I, COX5A, COX5B, COX6A, COX6B, COX6C, COX7A, COX7B, COX7C, COX8 and NDUFA4, which are encoded in the nuclear genome. The complex exists as a monomer or a dimer and forms supercomplexes (SCs) in the inner mitochondrial membrane with NADH-ubiquinone oxidoreductase (complex I, CI) and ubiquinol-cytochrome c oxidoreductase (cytochrome b-c1 complex, complex III, CIII), resulting in different assemblies (supercomplex SCI(1)III(2)IV(1) and megacomplex MCI(2)III(2)IV(2)). Found in a complex with TMEM177, COA6, COX18, COX20, SCO1 and SCO2. Interacts with TMEM177 in a COX20-dependent manner. Interacts with COX20. Interacts with COX16. Cu cation serves as cofactor.

The protein localises to the mitochondrion inner membrane. It catalyses the reaction 4 Fe(II)-[cytochrome c] + O2 + 8 H(+)(in) = 4 Fe(III)-[cytochrome c] + 2 H2O + 4 H(+)(out). Its function is as follows. Component of the cytochrome c oxidase, the last enzyme in the mitochondrial electron transport chain which drives oxidative phosphorylation. The respiratory chain contains 3 multisubunit complexes succinate dehydrogenase (complex II, CII), ubiquinol-cytochrome c oxidoreductase (cytochrome b-c1 complex, complex III, CIII) and cytochrome c oxidase (complex IV, CIV), that cooperate to transfer electrons derived from NADH and succinate to molecular oxygen, creating an electrochemical gradient over the inner membrane that drives transmembrane transport and the ATP synthase. Cytochrome c oxidase is the component of the respiratory chain that catalyzes the reduction of oxygen to water. Electrons originating from reduced cytochrome c in the intermembrane space (IMS) are transferred via the dinuclear copper A center (CU(A)) of subunit 2 and heme A of subunit 1 to the active site in subunit 1, a binuclear center (BNC) formed by heme A3 and copper B (CU(B)). The BNC reduces molecular oxygen to 2 water molecules using 4 electrons from cytochrome c in the IMS and 4 protons from the mitochondrial matrix. This Lycalopex vetulus (Hoary fox) protein is Cytochrome c oxidase subunit 2 (MT-CO2).